The following is a 237-amino-acid chain: Phosphoribosylaminoimidazole-succinocarboxamide synthase (237 aa).

This sequence belongs to the SAICAR synthetase family.

It catalyses the reaction 5-amino-1-(5-phospho-D-ribosyl)imidazole-4-carboxylate + L-aspartate + ATP = (2S)-2-[5-amino-1-(5-phospho-beta-D-ribosyl)imidazole-4-carboxamido]succinate + ADP + phosphate + 2 H(+). It participates in purine metabolism; IMP biosynthesis via de novo pathway; 5-amino-1-(5-phospho-D-ribosyl)imidazole-4-carboxamide from 5-amino-1-(5-phospho-D-ribosyl)imidazole-4-carboxylate: step 1/2. The sequence is that of Phosphoribosylaminoimidazole-succinocarboxamide synthase from Halalkalibacterium halodurans (strain ATCC BAA-125 / DSM 18197 / FERM 7344 / JCM 9153 / C-125) (Bacillus halodurans).